The chain runs to 258 residues: L-fucose dehydrogenase (258 aa).

Residues Ser17, Ile19, Arg39, His40, Glu63, Leu64, and Asn90 each coordinate NADP(+). Residues Asn94, Ser140, Lys141, Gln147, and Tyr153 each contribute to the beta-L-fucose site. The NADP(+) site is built by Tyr153 and Lys157. Tyr153 serves as the catalytic Proton acceptor. Ala184 and Glu185 together coordinate beta-L-fucose. Residues Val186 and Thr188 each contribute to the NADP(+) site.

It belongs to the short-chain dehydrogenases/reductases (SDR) family. As to quaternary structure, homotetramer; dimer of dimers.

The enzyme catalyses beta-L-fucose + NADP(+) = L-fucono-1,5-lactone + NADPH + H(+). It carries out the reaction D-arabinose + NADP(+) = D-arabinono-1,5-lactone + NADPH + H(+). It participates in carbohydrate degradation; L-fucose degradation. In terms of biological role, L-fucose dehydrogenase involved in an L-fucose degradation pathway. Catalyzes the oxidation of L-fucose to L-fucono-1,5-lactone. Can also act on D-arabinose, with lower catalytic efficiency, and has weak activity with L-galactose and 4-deoxy-L-fucose. Shows a preference for NADP(+) over NAD(+). The chain is L-fucose dehydrogenase from Burkholderia multivorans (strain ATCC 17616 / 249).